The chain runs to 352 residues: Holliday junction branch migration complex subunit RuvB (352 aa).

The segment at 4–185 is large ATPase domain (RuvB-L); sequence ADRLIAATGP…FGIVQRLEFY (182 aa). ATP contacts are provided by residues I24, R25, G66, K69, T70, T71, 132–134, R175, Y185, and R222; that span reads EDF. Position 70 (T70) interacts with Mg(2+). The small ATPAse domain (RuvB-S) stretch occupies residues 186–256; the sequence is STADLATIVS…IADLALNLLD (71 aa). Positions 259–352 are head domain (RuvB-H); it reads ERGFDHQDRR…VDEFLDAVDD (94 aa). Residues R295, R314, and R319 each contribute to the DNA site.

Belongs to the RuvB family. Homohexamer. Forms an RuvA(8)-RuvB(12)-Holliday junction (HJ) complex. HJ DNA is sandwiched between 2 RuvA tetramers; dsDNA enters through RuvA and exits via RuvB. An RuvB hexamer assembles on each DNA strand where it exits the tetramer. Each RuvB hexamer is contacted by two RuvA subunits (via domain III) on 2 adjacent RuvB subunits; this complex drives branch migration. In the full resolvosome a probable DNA-RuvA(4)-RuvB(12)-RuvC(2) complex forms which resolves the HJ.

It is found in the cytoplasm. The enzyme catalyses ATP + H2O = ADP + phosphate + H(+). In terms of biological role, the RuvA-RuvB-RuvC complex processes Holliday junction (HJ) DNA during genetic recombination and DNA repair, while the RuvA-RuvB complex plays an important role in the rescue of blocked DNA replication forks via replication fork reversal (RFR). RuvA specifically binds to HJ cruciform DNA, conferring on it an open structure. The RuvB hexamer acts as an ATP-dependent pump, pulling dsDNA into and through the RuvAB complex. RuvB forms 2 homohexamers on either side of HJ DNA bound by 1 or 2 RuvA tetramers; 4 subunits per hexamer contact DNA at a time. Coordinated motions by a converter formed by DNA-disengaged RuvB subunits stimulates ATP hydrolysis and nucleotide exchange. Immobilization of the converter enables RuvB to convert the ATP-contained energy into a lever motion, pulling 2 nucleotides of DNA out of the RuvA tetramer per ATP hydrolyzed, thus driving DNA branch migration. The RuvB motors rotate together with the DNA substrate, which together with the progressing nucleotide cycle form the mechanistic basis for DNA recombination by continuous HJ branch migration. Branch migration allows RuvC to scan DNA until it finds its consensus sequence, where it cleaves and resolves cruciform DNA. In Pseudomonas fluorescens (strain ATCC BAA-477 / NRRL B-23932 / Pf-5), this protein is Holliday junction branch migration complex subunit RuvB.